The following is a 1138-amino-acid chain: Pesticidal crystal protein Cry7Ab (1138 aa).

It belongs to the delta endotoxin family.

Functionally, promotes colloidosmotic lysis by binding to the midgut epithelial cells of Coleoptera. The sequence is that of Pesticidal crystal protein Cry7Ab (cry7Ab) from Bacillus thuringiensis subsp. dakota.